A 151-amino-acid polypeptide reads, in one-letter code: Ribosome maturation factor RimP (151 aa).

It belongs to the RimP family.

Its subcellular location is the cytoplasm. Required for maturation of 30S ribosomal subunits. The polypeptide is Ribosome maturation factor RimP (Aliivibrio fischeri (strain ATCC 700601 / ES114) (Vibrio fischeri)).